The sequence spans 346 residues: DNA-directed RNA polymerases I and III subunit RPAC1 (346 aa).

N-acetylalanine is present on Ala-2. At Ser-4 the chain carries Phosphoserine.

It belongs to the archaeal Rpo3/eukaryotic RPB3 RNA polymerase subunit family. In terms of assembly, component of the RNA polymerase I and RNA polymerase III complexes consisting of at least 13 and 17 subunits, respectively. Pol I complex consists of a ten-subunit catalytic core composed of POLR1A/RPA1, POLR1B/RPA2, POLR1C/RPAC1, POLR1D/RPAC2, POLR1H/RPA12, POLR2E/RPABC1, POLR2F/RPABC2, POLR2H/RPABC3, POLR2K/RPABC4 and POLR2L/RPABC5; a mobile stalk subunit POLR1F/RPA43 protruding from the core and additional subunits homologous to general transcription factors POLR1E/RPA49 and POLR1G/RPA34. Part of Pol I pre-initiation complex (PIC), in which Pol I core assembles with RRN3 and promoter-bound UTBF and SL1/TIF-IB complex. Pol III complex consists of a ten-subunit catalytic core composed of POLR3A/RPC1, POLR3B/RPC2, POLR1C/RPAC1, POLR1D/RPAC2, POLR3K/RPC10, POLR2E/RPABC1, POLR2F/RPABC2, POLR2H/RPABC3, POLR2K/RPABC4 and POLR2L/RPABC5; a mobile stalk composed of two subunits POLR3H/RPC8 and CRCP/RPC9, protruding from the core and functioning primarily in transcription initiation; and additional subunits homologous to general transcription factors of the RNA polymerase II machinery, POLR3C/RPC3-POLR3F/RPC6-POLR3G/RPC7 heterotrimer required for transcription initiation and POLR3D/RPC4-POLR3E/RPC5 heterodimer involved in both transcription initiation and termination.

It is found in the nucleus. The protein localises to the nucleolus. The protein resides in the cytoplasm. It localises to the cytosol. Functionally, DNA-dependent RNA polymerase catalyzes the transcription of DNA into RNA using the four ribonucleoside triphosphates as substrates. Common component of RNA polymerases I and III which synthesize ribosomal RNA precursors and short non-coding RNAs including 5S rRNA, snRNAs, tRNAs and miRNAs, respectively. POLR1C/RPAC1 is part of the polymerase core and may function as a clamp element that moves to open and close the cleft. The chain is DNA-directed RNA polymerases I and III subunit RPAC1 from Homo sapiens (Human).